Reading from the N-terminus, the 252-residue chain is Pantothenate synthetase (252 aa).

29-36 provides a ligand contact to ATP; that stretch reads MGNLHAGH. The active-site Proton donor is the histidine 36. Glutamine 60 contributes to the (R)-pantoate binding site. Residue glutamine 60 coordinates beta-alanine. Position 146-149 (146-149) interacts with ATP; sequence GEKD. A (R)-pantoate-binding site is contributed by glutamine 152. ATP-binding positions include valine 175 and 183–186; that span reads CSSR.

The protein belongs to the pantothenate synthetase family. In terms of assembly, homodimer.

It is found in the cytoplasm. The enzyme catalyses (R)-pantoate + beta-alanine + ATP = (R)-pantothenate + AMP + diphosphate + H(+). It participates in cofactor biosynthesis; (R)-pantothenate biosynthesis; (R)-pantothenate from (R)-pantoate and beta-alanine: step 1/1. Its function is as follows. Catalyzes the condensation of pantoate with beta-alanine in an ATP-dependent reaction via a pantoyl-adenylate intermediate. The sequence is that of Pantothenate synthetase from Legionella pneumophila subsp. pneumophila (strain Philadelphia 1 / ATCC 33152 / DSM 7513).